A 200-amino-acid polypeptide reads, in one-letter code: Putative HMP/thiamine-binding protein YkoF (200 aa).

Thiamine contacts are provided by L17 and T49.

In terms of assembly, homodimer in vitro. In vivo, may be a part of an ABC transporter complex which is composed of two ATP-binding proteins (YkoD), two transmembrane proteins (YkoC and YkoE) and a solute-binding protein (YkoF).

Its function is as follows. Part of the ABC transporter complex YkoCDEF that could transport hydroxymethylpyrimidine (HMP) and/or thiamine. Could also transport other HMP-containing products. Binds thiamine via its HMP moiety. The protein is Putative HMP/thiamine-binding protein YkoF (ykoF) of Bacillus subtilis (strain 168).